The sequence spans 274 residues: Diaminopimelate epimerase (274 aa).

Residues Asn-11, Gln-44, and Asn-64 each contribute to the substrate site. Catalysis depends on Cys-73, which acts as the Proton donor. Residues 74–75, Asn-157, Asn-190, and 208–209 contribute to the substrate site; these read GN and ER. Residue Cys-217 is the Proton acceptor of the active site. 218–219 is a substrate binding site; that stretch reads GS.

The protein belongs to the diaminopimelate epimerase family. Homodimer.

Its subcellular location is the cytoplasm. It carries out the reaction (2S,6S)-2,6-diaminopimelate = meso-2,6-diaminopimelate. It participates in amino-acid biosynthesis; L-lysine biosynthesis via DAP pathway; DL-2,6-diaminopimelate from LL-2,6-diaminopimelate: step 1/1. Catalyzes the stereoinversion of LL-2,6-diaminopimelate (L,L-DAP) to meso-diaminopimelate (meso-DAP), a precursor of L-lysine and an essential component of the bacterial peptidoglycan. This Actinobacillus succinogenes (strain ATCC 55618 / DSM 22257 / CCUG 43843 / 130Z) protein is Diaminopimelate epimerase.